The sequence spans 433 residues: Protein arginine N-methyltransferase 2 (433 aa).

Residues 1–27 form a disordered region; that stretch reads MSTSGCSSEKSDFQDSTEGEEEEDTQS. Over residues 15-26 the composition is skewed to acidic residues; the sequence is DSTEGEEEEDTQ. Positions 30–89 constitute an SH3 domain; that stretch reads LCMREYVVIRDYMAADATQLSLCFGDKVLLLSAVTQDWWWVKHNGICGYVPASYLHDALN. The region spanning 102–416 is the SAM-dependent MTase PRMT-type domain; sequence DEEYYGSYKT…MSVTLSWVIN (315 aa). S-adenosyl-L-methionine is bound by residues His115, Arg124, Gly148, Glu171, and Glu200. Active-site residues include Glu214 and Glu223.

Belongs to the class I-like SAM-binding methyltransferase superfamily. Protein arginine N-methyltransferase family. Interacts with ctnnb1.

It localises to the cytoplasm. The protein localises to the nucleus. The catalysed reaction is L-arginyl-[protein] + 2 S-adenosyl-L-methionine = N(omega),N(omega)-dimethyl-L-arginyl-[protein] + 2 S-adenosyl-L-homocysteine + 2 H(+). Arginine methyltransferase that methylates the guanidino nitrogens of arginyl residues in proteins such as histones. Involved in growth regulation. Involved in embryonic dorsal development. This chain is Protein arginine N-methyltransferase 2 (prmt2), found in Xenopus tropicalis (Western clawed frog).